A 114-amino-acid polypeptide reads, in one-letter code: Ghrelin (114 aa).

The signal sequence occupies residues 1 to 24 (MNFGKAAIFGVVLFCLLWTEGAQA). A lipid anchor (O-decanoyl threonine; alternate) is attached at Thr-27. The O-octanoyl threonine; alternate moiety is linked to residue Thr-27. Residues 55–114 (GVEDDLAGEEIGVTFPLDMKMTQEQFQKQRAAVQDFLYSSLLSLGSVQDTEDKNENPQSQ) constitute a propeptide, removed in mature form.

Belongs to the motilin family. Post-translationally, O-octanoylated by GOAT/MBOAT4. O-octanoylation or O-decanoylation is essential for activity. The O-decanoylated form ghrelin-27-C10 differs in the length of the carbon backbone of the carboxylic acid bound to Thr-27. 33% of frog ghrelin is O-decanoylated. In terms of processing, 80% of frog ghrelin has Asn-52 cleaved from its C-terminus giving rise to ghrelin-27. High levels in stomach. Moderate levels in small intestine, pancreas and testis. Low levels in heart, lung and gall bladder.

Its subcellular location is the secreted. Its function is as follows. Ligand for growth hormone secretagogue receptor type 1 (GHSR). Induces the release of growth hormone from the pituitary. Has an appetite-stimulating effect, induces adiposity and stimulates gastric acid secretion. Involved in growth regulation. In Aquarana catesbeiana (American bullfrog), this protein is Ghrelin (GHRL).